Here is an 801-residue protein sequence, read N- to C-terminus: 1-phosphatidylinositol 4,5-bisphosphate phosphodiesterase (801 aa).

The 36-residue stretch at 206 to 241 folds into the EF-hand domain; it reads TSDAVLHNLMKFSDSNSDYHLDFSEFSNLLKLLRSH. Positions 322–464 constitute a PI-PLC X-box domain; the sequence is QDTSKPLSYY…SLKYKILLKG (143 aa). Active-site residues include His-337 and His-382. Residue Lys-463 participates in substrate binding. Low complexity predominate over residues 471–485; sequence VSAVGNSSASSSQSN. The interval 471-523 is disordered; sequence VSAVGNSSASSSQSNIQTDDNDDDGAVDLTEYDEVDDRSASSSSSSFSLSFGS. The segment covering 489–506 has biased composition (acidic residues); sequence DDNDDDGAVDLTEYDEVD. Ca(2+) is bound by residues Asp-490, Asp-492, Asp-494, and Glu-501. Residues 510 to 523 show a composition bias toward low complexity; it reads ASSSSSSFSLSFGS. At Ser-524 the chain carries Phosphoserine. Phosphothreonine; by PKA and PKG is present on Thr-531. One can recognise a PI-PLC Y-box domain in the interval 542 to 652; sequence LIYLVSHGFK…CGYVLKPPCL (111 aa). Substrate contacts are provided by Ser-566 and Arg-593. Residues 656–781 form the C2 domain; sequence ECETYDPTSP…RPGYRILKLK (126 aa).

It carries out the reaction a 1,2-diacyl-sn-glycero-3-phospho-(1D-myo-inositol-4,5-bisphosphate) + H2O = 1D-myo-inositol 1,4,5-trisphosphate + a 1,2-diacyl-sn-glycerol + H(+). The production of the second messenger molecules diacylglycerol (DAG) and inositol 1,4,5-trisphosphate (IP3) is mediated by activated phosphatidylinositol-specific phospholipase C enzymes. This is 1-phosphatidylinositol 4,5-bisphosphate phosphodiesterase (plc) from Dictyostelium discoideum (Social amoeba).